The following is a 202-amino-acid chain: Putative 3-methyladenine DNA glycosylase (202 aa).

The protein belongs to the DNA glycosylase MPG family.

This chain is Putative 3-methyladenine DNA glycosylase, found in Staphylococcus aureus (strain Mu3 / ATCC 700698).